The primary structure comprises 115 residues: MLDGKTIIVVAADQGLRRSVAFALEVEGYYTESYDSVQKSEASCREALCAIVDDDILRTEPQAAAQFLSNRGGRAILLVDGLSALQPPVDYATLTKPFTGADLLGVINSLVVAAK.

As to quaternary structure, interacts directly with FixL.

Functionally, prevents transcription of the intermediate key regulatory genes nifA and fixK by counteracting the activity of the FixLJ two-component system. Acts as an inhibitor of the sensor hemoprotein kinase fixL, preventing the production or the accumulation of its phosphorylated form. The sequence is that of Transcriptional regulator protein FixT (fixT) from Rhizobium meliloti (strain 1021) (Ensifer meliloti).